The sequence spans 450 residues: Asparagine--tRNA ligase (450 aa).

This sequence belongs to the class-II aminoacyl-tRNA synthetase family. As to quaternary structure, homodimer.

It is found in the cytoplasm. The enzyme catalyses tRNA(Asn) + L-asparagine + ATP = L-asparaginyl-tRNA(Asn) + AMP + diphosphate + H(+). This Mycoplasmopsis pulmonis (strain UAB CTIP) (Mycoplasma pulmonis) protein is Asparagine--tRNA ligase.